We begin with the raw amino-acid sequence, 166 residues long: ATP synthase subunit b (166 aa).

Residues 10–30 traverse the membrane as a helical segment; sequence LLFWMIVSFGIVFVILSKYGF.

Belongs to the ATPase B chain family. F-type ATPases have 2 components, F(1) - the catalytic core - and F(0) - the membrane proton channel. F(1) has five subunits: alpha(3), beta(3), gamma(1), delta(1), epsilon(1). F(0) has three main subunits: a(1), b(2) and c(10-14). The alpha and beta chains form an alternating ring which encloses part of the gamma chain. F(1) is attached to F(0) by a central stalk formed by the gamma and epsilon chains, while a peripheral stalk is formed by the delta and b chains.

The protein localises to the cell inner membrane. Its function is as follows. F(1)F(0) ATP synthase produces ATP from ADP in the presence of a proton or sodium gradient. F-type ATPases consist of two structural domains, F(1) containing the extramembraneous catalytic core and F(0) containing the membrane proton channel, linked together by a central stalk and a peripheral stalk. During catalysis, ATP synthesis in the catalytic domain of F(1) is coupled via a rotary mechanism of the central stalk subunits to proton translocation. Functionally, component of the F(0) channel, it forms part of the peripheral stalk, linking F(1) to F(0). In Parabacteroides distasonis (strain ATCC 8503 / DSM 20701 / CIP 104284 / JCM 5825 / NCTC 11152), this protein is ATP synthase subunit b.